We begin with the raw amino-acid sequence, 237 residues long: Phosphoribosylaminoimidazole-succinocarboxamide synthase (237 aa).

It belongs to the SAICAR synthetase family.

It carries out the reaction 5-amino-1-(5-phospho-D-ribosyl)imidazole-4-carboxylate + L-aspartate + ATP = (2S)-2-[5-amino-1-(5-phospho-beta-D-ribosyl)imidazole-4-carboxamido]succinate + ADP + phosphate + 2 H(+). It participates in purine metabolism; IMP biosynthesis via de novo pathway; 5-amino-1-(5-phospho-D-ribosyl)imidazole-4-carboxamide from 5-amino-1-(5-phospho-D-ribosyl)imidazole-4-carboxylate: step 1/2. This Escherichia coli O7:K1 (strain IAI39 / ExPEC) protein is Phosphoribosylaminoimidazole-succinocarboxamide synthase.